A 554-amino-acid polypeptide reads, in one-letter code: Inactive sesquithujene synthase (554 aa).

Mg(2+) contacts are provided by Asp-308 and Asp-312. The substrate site is built by Asp-308, Asp-312, Arg-449, and Asn-452. Positions 308–312 (DDMFD) match the DDXXD motif motif. Asn-452, Ser-456, and Glu-460 together coordinate Mg(2+).

It belongs to the terpene synthase family. Monomer. Requires Mg(2+) as cofactor. It depends on Mn(2+) as a cofactor.

Its subcellular location is the cytoplasm. It functions in the pathway secondary metabolite biosynthesis; terpenoid biosynthesis. Functionally, non-functional sesquiterpene synthase having less than 1% of the activity found in cv. Delprim. This chain is Inactive sesquithujene synthase, found in Zea mays (Maize).